The chain runs to 130 residues: Small ribosomal subunit protein uS9 (130 aa).

Belongs to the universal ribosomal protein uS9 family.

This chain is Small ribosomal subunit protein uS9, found in Brevibacillus brevis (strain 47 / JCM 6285 / NBRC 100599).